The primary structure comprises 348 residues: Myricetin O-methyltransferase (348 aa).

M1 is modified (N-acetylmethionine). S-adenosyl-L-methionine is bound by residues G189, D212, D232, M233, and K246. H250 serves as the catalytic Proton acceptor.

The N-terminus is blocked.

It catalyses the reaction S-adenosyl-L-methionine + a 3'-hydroxyflavonoid = S-adenosyl-L-homocysteine + a 3'-methoxyflavonoid.. The enzyme catalyses S-adenosyl-L-methionine + a 5'-hydroxy-3'-methoxyflavonoid = S-adenosyl-L-homocysteine + a 3',5'-dimethoxyflavonoid.. Its function is as follows. Methylates myricetin and dihydromyricetin at 2 sites. Inactive towards 16-hydroxytabersonine, the phenylpropanoids 5-hydroxyferulate, caffeate and their CoA-esters, flavones and flavanones possessing 2 or 3 B-ring hydroxyl groups. This Catharanthus roseus (Madagascar periwinkle) protein is Myricetin O-methyltransferase.